A 313-amino-acid polypeptide reads, in one-letter code: Olfactory receptor 1G1 (313 aa).

Residues 1 to 25 lie on the Extracellular side of the membrane; that stretch reads MEGKNLTSISEFFLLGFSEQLEEQK. An N-linked (GlcNAc...) asparagine glycan is attached at N5. A helical transmembrane segment spans residues 26–49; the sequence is ALFGSFLFMYLVMVAGNLLIILVI. Topologically, residues 50-57 are cytoplasmic; the sequence is ITDTQLHT. Residues 58 to 79 form a helical membrane-spanning segment; it reads PMYFFLANLSLADACFVSTTVP. At 80 to 100 the chain is on the extracellular side; it reads KMLANIQIQSQAISYSGCLLQ. Residues C97 and C189 are joined by a disulfide bond. A helical membrane pass occupies residues 101 to 120; sequence LYFFMLFVMLEAFLLAVMAY. Topologically, residues 121 to 140 are cytoplasmic; the sequence is DHYVAICHPLHYILIMSPGL. A helical membrane pass occupies residues 141 to 158; that stretch reads CVFLVSASWIMNALYSLL. Residues 159 to 196 are Extracellular-facing; the sequence is HTLLMNSLSFCANHEIPHFFCDIDPLLSLSCADPFTNE. Residues 197-219 traverse the membrane as a helical segment; that stretch reads LVIFITGGLTGLICVLCLIISYT. Residues 220 to 236 lie on the Cytoplasmic side of the membrane; the sequence is NVFSTILKIPSAQGKRK. The helical transmembrane segment at 237–259 threads the bilayer; that stretch reads AFSTCSSHLSVVSLFXGTSFCVY. The Extracellular segment spans residues 260–272; sequence FSPPSTRXAQKDT. The chain crosses the membrane as a helical span at residues 273–292; it reads VASVMYTVVTPMLNPFIYSL. Residues 293 to 313 are Cytoplasmic-facing; that stretch reads RNQEIKSSLRKLIWVRKIHSP.

The protein belongs to the G-protein coupled receptor 1 family.

The protein resides in the cell membrane. In terms of biological role, odorant receptor. The protein is Olfactory receptor 1G1 (OR1G1) of Pan troglodytes (Chimpanzee).